We begin with the raw amino-acid sequence, 172 residues long: MAEKRNIFLVGPMGAGKSTIGRHLAQQLHMEFLDSDTVIEERTGADIAWVFDVEGEEGFRKREEGVINDLTQEQGIVLATGGGSVISKESRNRLSARGVVVYLETTIEKQLARTQRDKKRPLLQTDEPREVLEALAKERNALYEEVSDYVVRTDDQSAKVVANQIIQMLEER.

ATP is bound at residue 14-19; the sequence is GAGKST. Residue S18 participates in Mg(2+) binding. Residues D36, R60, and G82 each contribute to the substrate site. R120 is a binding site for ATP. A substrate-binding site is contributed by R139. Residue Q156 coordinates ATP.

The protein belongs to the shikimate kinase family. Monomer. Requires Mg(2+) as cofactor.

It localises to the cytoplasm. It carries out the reaction shikimate + ATP = 3-phosphoshikimate + ADP + H(+). The protein operates within metabolic intermediate biosynthesis; chorismate biosynthesis; chorismate from D-erythrose 4-phosphate and phosphoenolpyruvate: step 5/7. In terms of biological role, catalyzes the specific phosphorylation of the 3-hydroxyl group of shikimic acid using ATP as a cosubstrate. The chain is Shikimate kinase from Aliivibrio fischeri (strain ATCC 700601 / ES114) (Vibrio fischeri).